We begin with the raw amino-acid sequence, 710 residues long: MRRGSSESELAARWEAEAVAAAKAAAKAEAEATAETVAEQVRVDAGAAGEPECKAGEEQPKVLAPAPAQPSAAEEGNTQVLQRPPPTLPPSKPKPVQGLCPHGKPRDKGRSCKRSSGHGSGENGSQRPVTVDSSKARTSLDALKISIRQLKWKEFPFGRRLPCDIYWHGVSFHDNDIFSGQVNKFPGMTEMVRKITLSRAVRTMQNLFPEEYNFYPRSWILPDEFQLFVAQVQMVKDDDPSWKPTFIVKPDGGCQGDGIYLIKDPSDIRLAGTLQSRPAVVQEYICKPLLIDKLKFDIRLYVLLKSLDPLEIYIAKDGLSRFCTEPYQEPTPKNLHRIFMHLTNYSLNIHSGNFIHSDSASTGSKRTFSSILCRLSSKGVDIKKVWSDIISVVIKTVIALTPELKVFYQSDIPTGRPGPTCFQILGFDILLMKNLKPILLEVNANPSMRIEHEHELSPGVFENVPSLVDEEVKVAVIRDTLRLMDPLKKKRENQSQQLEKPFAGKEDALDGELTSAPDCNANPEAHLPSICLKQVFPKYAKQFNYLRLVDRMANLFIRFLGIKGTMKLGPTGFRTFIRSCKLSSSSLSMAAVDILYIDITRRWNSMTLDQRDSGMCLQAFVEAFFFLAQRKFKMLPLHEQVASLIDLCEYHLSLLDEKRLVCGRGVPSGGRPPHRGPPQEPSPSAQPAGDNPPPRTSCANKLSHPRHTLS.

The segment at 41–135 (VRVDAGAAGE…QRPVTVDSSK (95 aa)) is disordered. Residues 51–60 (PECKAGEEQP) are compositionally biased toward basic and acidic residues. Residues 64–82 (APAPAQPSAAEEGNTQVLQ) are compositionally biased toward low complexity. The segment covering 83-93 (RPPPTLPPSKP) has biased composition (pro residues). Residues 123–135 (NGSQRPVTVDSSK) are compositionally biased toward polar residues. A TTL domain is found at 128–480 (PVTVDSSKAR…EVKVAVIRDT (353 aa)). ATP is bound by residues Lys-249, 255–256 (QG), 282–285 (QEYI), and 295–297 (KFD). Position 255 (Gln-255) interacts with a protein. Arg-321 provides a ligand contact to L-glutamate. Residue 343–344 (TN) participates in ATP binding. L-glutamate is bound by residues Tyr-345, Ser-346, and Lys-365. Mg(2+) is bound by residues Asp-428, Glu-441, and Asn-443. The interval 467 to 538 (LVDEEVKVAV…SICLKQVFPK (72 aa)) is c-MTBD region. Position 473 (Lys-473) interacts with L-glutamate. Positions 665 to 710 (GVPSGGRPPHRGPPQEPSPSAQPAGDNPPPRTSCANKLSHPRHTLS) are disordered.

It belongs to the tubulin--tyrosine ligase family. Requires Mg(2+) as cofactor.

It localises to the cytoplasm. The protein resides in the cytoskeleton. Its subcellular location is the cilium basal body. It catalyses the reaction L-glutamyl-[protein] + L-glutamate + ATP = gamma-L-glutamyl-L-glutamyl-[protein] + ADP + phosphate + H(+). It carries out the reaction (L-glutamyl)(n)-gamma-L-glutamyl-L-glutamyl-[protein] + L-glutamate + ATP = (L-glutamyl)(n+1)-gamma-L-glutamyl-L-glutamyl-[protein] + ADP + phosphate + H(+). In terms of biological role, polyglutamylase which modifies tubulin, generating polyglutamate side chains of variable lengths on the gamma-carboxyl group of specific glutamate residues within the C-terminal tail of tubulin. Preferentially mediates ATP-dependent polyglutamate long side-chain elongation over the initiation step of the polyglutamylation reaction. Preferentially modifies the alpha-tubulin tail over a beta-tail. Required for CCSAP localization to both spindle and cilia microtubules. Promotes tubulin polyglutamylation which stimulates spastin/SPAST-mediated microtubule severing, thereby regulating microtubule functions. In Homo sapiens (Human), this protein is Tubulin polyglutamylase TTLL11.